Here is a 195-residue protein sequence, read N- to C-terminus: Ras-related protein Rab-31 (195 aa).

GTP is bound by residues G16, G18, K19, S20, S21, D32, and H33. S20 is a Mg(2+) binding site. Short sequence motifs (switch) lie at residues 30 to 42 and 63 to 79; these read HFDHNISPTIGAS and AGQERFHSLAPMYYRGS. Position 36 is a phosphoserine (S36). GTP contacts are provided by T38, G64, N119, D122, A150, and K151. T38 lines the Mg(2+) pocket. S-geranylgeranyl cysteine attachment occurs at residues C194 and C195.

Belongs to the small GTPase superfamily. Rab family. Interacts with OCRL. Interacts with NGFR. Interacts (in GDP-bound form) with RIN3 and GAPVD1, which function as guanine exchange factors (GEF). Interacts (in GTP-bound form) with EEA1. Interacts with EGFR. Interacts (in GTP-bound form) with APPL2; interaction contributes to or enhances recruitment of APPL2 to the phagosomes; interaction enhances Fc-gamma receptor-mediated phagocytosis through PI3K/Akt signaling in macrophages. It depends on Mg(2+) as a cofactor. As to expression, highest expression in placenta and brain with lower levels in heart and lung. Not detected in liver, skeletal muscle, kidney or pancreas.

The protein resides in the golgi apparatus. Its subcellular location is the trans-Golgi network. It localises to the trans-Golgi network membrane. The protein localises to the early endosome. It is found in the cytoplasmic vesicle. The protein resides in the phagosome. Its subcellular location is the phagosome membrane. The catalysed reaction is GTP + H2O = GDP + phosphate + H(+). Its activity is regulated as follows. Regulated by guanine nucleotide exchange factors (GEFs) including RIN3 and GAPVD1 which promote the exchange of bound GDP for free GTP. Regulated by GTPase activating proteins (GAPs) which increase the GTP hydrolysis activity. Inhibited by GDP dissociation inhibitors (GDIs) which prevent Rab-GDP dissociation. Functionally, the small GTPases Rab are key regulators of intracellular membrane trafficking, from the formation of transport vesicles to their fusion with membranes. Rabs cycle between an inactive GDP-bound form and an active GTP-bound form that is able to recruit to membranes different set of downstream effectors directly responsible for vesicle formation, movement, tethering and fusion. Required for the integrity and for normal function of the Golgi apparatus and the trans-Golgi network. Plays a role in insulin-stimulated translocation of GLUT4 to the cell membrane. Plays a role in M6PR transport from the trans-Golgi network to endosomes. Plays a role in the internalization of EGFR from the cell membrane into endosomes. Plays a role in the maturation of phagosomes that engulf pathogens, such as S.aureus and M.tuberculosis. The chain is Ras-related protein Rab-31 from Homo sapiens (Human).